A 233-amino-acid polypeptide reads, in one-letter code: Tapetum-specific methyltransferase 1 (233 aa).

Substrate is bound at residue lysine 8. S-adenosyl-L-methionine contacts are provided by residues valine 52, glutamate 74, 76-77, serine 82, aspartate 100, and alanine 129; that span reads GV. Aspartate 150 serves as a coordination point for substrate. Residue aspartate 150 coordinates a divalent metal cation. Aspartate 152 contacts S-adenosyl-L-methionine. Residues aspartate 176 and asparagine 177 each contribute to the a divalent metal cation site.

Belongs to the class I-like SAM-binding methyltransferase superfamily. Cation-dependent O-methyltransferase family. CCoAMT subfamily. It depends on a divalent metal cation as a cofactor. In terms of tissue distribution, expressed in inflorescences and flower buds. Not detected in roots, leaves or stems. Located exclusively in the tapetum of developing stamen.

Its pathway is aromatic compound metabolism; phenylpropanoid biosynthesis. Methyltransferase involved in phenylpropanoid polyamine conjugate biosynthesis. In vivo, methylates only one of the 5-hydroxyferuloyl moieties of N1,N5,N10-tri-(hydroxyferuloyl)-spermidine, while is able in vitro to convert all three 5-hydroxyferuloyl residues to the corresponding sinapoyl moieties and to methylate caffeoyl CoA and tricaffeoyl spermidine. This Arabidopsis thaliana (Mouse-ear cress) protein is Tapetum-specific methyltransferase 1 (TSM1).